The following is a 185-amino-acid chain: Acireductone dioxygenase (185 aa).

The tract at residues 1–22 is disordered; sequence MSRLSIHPEGSTNATSPAEPLL. Positions 102, 104, 108, and 146 each coordinate Fe(2+). Ni(2+) contacts are provided by His-102, His-104, Glu-108, and His-146.

It belongs to the acireductone dioxygenase (ARD) family. Monomer. Fe(2+) serves as cofactor. It depends on Ni(2+) as a cofactor.

The catalysed reaction is 1,2-dihydroxy-5-(methylsulfanyl)pent-1-en-3-one + O2 = 3-(methylsulfanyl)propanoate + CO + formate + 2 H(+). It carries out the reaction 1,2-dihydroxy-5-(methylsulfanyl)pent-1-en-3-one + O2 = 4-methylsulfanyl-2-oxobutanoate + formate + 2 H(+). The protein operates within amino-acid biosynthesis; L-methionine biosynthesis via salvage pathway; L-methionine from S-methyl-5-thio-alpha-D-ribose 1-phosphate: step 5/6. Catalyzes 2 different reactions between oxygen and the acireductone 1,2-dihydroxy-3-keto-5-methylthiopentene (DHK-MTPene) depending upon the metal bound in the active site. Fe-containing acireductone dioxygenase (Fe-ARD) produces formate and 2-keto-4-methylthiobutyrate (KMTB), the alpha-ketoacid precursor of methionine in the methionine recycle pathway. Ni-containing acireductone dioxygenase (Ni-ARD) produces methylthiopropionate, carbon monoxide and formate, and does not lie on the methionine recycle pathway. This is Acireductone dioxygenase from Prochlorococcus marinus (strain MIT 9313).